The sequence spans 128 residues: Small ribosomal subunit protein uS12 (128 aa).

D89 is subject to 3-methylthioaspartic acid.

This sequence belongs to the universal ribosomal protein uS12 family. Part of the 30S ribosomal subunit. Contacts proteins S8 and S17. May interact with IF1 in the 30S initiation complex.

Its function is as follows. With S4 and S5 plays an important role in translational accuracy. Functionally, interacts with and stabilizes bases of the 16S rRNA that are involved in tRNA selection in the A site and with the mRNA backbone. Located at the interface of the 30S and 50S subunits, it traverses the body of the 30S subunit contacting proteins on the other side and probably holding the rRNA structure together. The combined cluster of proteins S8, S12 and S17 appears to hold together the shoulder and platform of the 30S subunit. The polypeptide is Small ribosomal subunit protein uS12 (Campylobacter jejuni subsp. jejuni serotype O:6 (strain 81116 / NCTC 11828)).